We begin with the raw amino-acid sequence, 95 residues long: uncharacterized protein (95 aa).

This is an uncharacterized protein from Human adenovirus B serotype 7 (HAdV-7).